A 157-amino-acid polypeptide reads, in one-letter code: Aspartate carbamoyltransferase regulatory chain (157 aa).

Zn(2+) contacts are provided by C108, C113, C138, and C141.

The protein belongs to the PyrI family. In terms of assembly, contains catalytic and regulatory chains. Requires Zn(2+) as cofactor.

In terms of biological role, involved in allosteric regulation of aspartate carbamoyltransferase. This is Aspartate carbamoyltransferase regulatory chain from Ignicoccus hospitalis (strain KIN4/I / DSM 18386 / JCM 14125).